The sequence spans 258 residues: Phosphosulfolactate synthase (258 aa).

Belongs to the phosphosulfolactate synthase family.

It catalyses the reaction (2R)-O-phospho-3-sulfolactate = phosphoenolpyruvate + sulfite + H(+). The protein operates within cofactor biosynthesis; coenzyme M biosynthesis; sulfoacetaldehyde from phosphoenolpyruvate and sulfite: step 1/4. Its function is as follows. Catalyzes the addition of sulfite to phosphoenolpyruvate (PEP) to yield (2R)-phospho-3-sulfolactate (PSL). In Methanothermobacter thermautotrophicus (strain ATCC 29096 / DSM 1053 / JCM 10044 / NBRC 100330 / Delta H) (Methanobacterium thermoautotrophicum), this protein is Phosphosulfolactate synthase (comA).